Here is a 291-residue protein sequence, read N- to C-terminus: ATP synthase gamma chain (291 aa).

Belongs to the ATPase gamma chain family. In terms of assembly, F-type ATPases have 2 components, CF(1) - the catalytic core - and CF(0) - the membrane proton channel. CF(1) has five subunits: alpha(3), beta(3), gamma(1), delta(1), epsilon(1). CF(0) has three main subunits: a, b and c.

It is found in the cell inner membrane. In terms of biological role, produces ATP from ADP in the presence of a proton gradient across the membrane. The gamma chain is believed to be important in regulating ATPase activity and the flow of protons through the CF(0) complex. The protein is ATP synthase gamma chain of Aquifex aeolicus (strain VF5).